A 419-amino-acid polypeptide reads, in one-letter code: Inositol-tetrakisphosphate 1-kinase (419 aa).

Lys-18 is a binding site for 1D-myo-inositol 1,3,4-trisphosphate. 2 residues coordinate ATP: Arg-106 and Lys-157. The region spanning Glu-117–Ala-334 is the ATP-grasp domain. Residues His-167 and Lys-199 each coordinate 1D-myo-inositol 1,3,4-trisphosphate. Residues Gln-188 to Lys-199, Ser-214, Ser-232, and Ser-236 contribute to the ATP site. Positions 281, 295, and 297 each coordinate Mg(2+). Asn-297 is a 1D-myo-inositol 1,3,4-trisphosphate binding site. An N6-acetyllysine; by EP300 and CREBBP modification is found at Lys-388. Position 401 is a phosphoserine (Ser-401). Lys-415 is modified (N6-acetyllysine; by EP300 and CREBBP).

It belongs to the ITPK1 family. As to quaternary structure, monomer. Interacts with GPS1/COPS1. It depends on Mg(2+) as a cofactor. In terms of processing, acetylation by EP300 and CREBBP destabilizes ITPK1, and down-regulates enzymatic activity. Deacetylated by SIRT1.

It catalyses the reaction 1D-myo-inositol 3,4,5,6-tetrakisphosphate + ATP = 1D-myo-inositol 1,3,4,5,6-pentakisphosphate + ADP + H(+). It carries out the reaction 1D-myo-inositol 1,3,4-trisphosphate + ATP = 1D-myo-inositol 1,3,4,5-tetrakisphosphate + ADP + H(+). The enzyme catalyses 1D-myo-inositol 1,3,4-trisphosphate + ATP = 1D-myo-inositol 1,3,4,6-tetrakisphosphate + ADP + H(+). The catalysed reaction is 1D-myo-inositol 3,4,6-trisphosphate + ATP = 1D-myo-inositol 1,3,4,6-tetrakisphosphate + ADP + H(+). It catalyses the reaction 1D-myo-inositol 1,3,4-trisphosphate + 1D-myo-inositol 1,3,4,5,6-pentakisphosphate = 1D-myo-inositol 3,4,5,6-tetrakisphosphate + 1D-myo-inositol 1,3,4,6-tetrakisphosphate. It carries out the reaction 1D-myo-inositol 1,3,4-trisphosphate + 1D-myo-inositol 1,3,4,5,6-pentakisphosphate = 1D-myo-inositol 3,4,5,6-tetrakisphosphate + 1D-myo-inositol 1,3,4,5-tetrakisphosphate. In terms of biological role, kinase that can phosphorylate various inositol polyphosphate such as Ins(3,4,5,6)P4 or Ins(1,3,4)P3. Phosphorylates Ins(3,4,5,6)P4 at position 1 to form Ins(1,3,4,5,6)P5. This reaction is thought to have regulatory importance, since Ins(3,4,5,6)P4 is an inhibitor of plasma membrane Ca(2+)-activated Cl(-) channels, while Ins(1,3,4,5,6)P5 is not. Also phosphorylates Ins(1,3,4)P3 on O-5 and O-6 to form Ins(1,3,4,6)P4, an essential molecule in the hexakisphosphate (InsP6) pathway. Also acts as an inositol polyphosphate phosphatase that dephosphorylates Ins(1,3,4,5)P4 and Ins(1,3,4,6)P4 to Ins(1,3,4)P3, and Ins(1,3,4,5,6)P5 to Ins(3,4,5,6)P4. May also act as an isomerase that interconverts the inositol tetrakisphosphate isomers Ins(1,3,4,5)P4 and Ins(1,3,4,6)P4 in the presence of ADP and magnesium. Probably acts as the rate-limiting enzyme of the InsP6 pathway. Modifies TNF-alpha-induced apoptosis by interfering with the activation of TNFRSF1A-associated death domain. Plays an important role in MLKL-mediated necroptosis. Produces highly phosphorylated inositol phosphates such as inositolhexakisphosphate (InsP6) which bind to MLKL mediating the release of an N-terminal auto-inhibitory region leading to its activation. Essential for activated phospho-MLKL to oligomerize and localize to the cell membrane during necroptosis. The polypeptide is Inositol-tetrakisphosphate 1-kinase (Mus musculus (Mouse)).